A 280-amino-acid polypeptide reads, in one-letter code: Probable endonuclease lcl3 (280 aa).

The helical transmembrane segment at 50–67 threads the bilayer; that stretch reads TLIPTLILTTAILSAARF. Positions 89–257 constitute a TNase-like domain; it reads RSIYGKVTSV…KLKGNGMWKG (169 aa). Arginine 140 is a catalytic residue. Aspartate 145 serves as a coordination point for Ca(2+). Residues glutamate 148 and arginine 188 contribute to the active site.

The protein belongs to the LCL3 family.

It localises to the mitochondrion. It is found in the membrane. In Emericella nidulans (strain FGSC A4 / ATCC 38163 / CBS 112.46 / NRRL 194 / M139) (Aspergillus nidulans), this protein is Probable endonuclease lcl3 (lcl3).